A 205-amino-acid polypeptide reads, in one-letter code: Methylthioribulose-1-phosphate dehydratase (205 aa).

C75 contributes to the substrate binding site. Zn(2+)-binding residues include H93 and H95. E116 (proton donor/acceptor) is an active-site residue. Zn(2+) is bound at residue H171.

Belongs to the aldolase class II family. MtnB subfamily. Zn(2+) serves as cofactor.

It is found in the cytoplasm. It catalyses the reaction 5-(methylsulfanyl)-D-ribulose 1-phosphate = 5-methylsulfanyl-2,3-dioxopentyl phosphate + H2O. It functions in the pathway amino-acid biosynthesis; L-methionine biosynthesis via salvage pathway; L-methionine from S-methyl-5-thio-alpha-D-ribose 1-phosphate: step 2/6. Catalyzes the dehydration of methylthioribulose-1-phosphate (MTRu-1-P) into 2,3-diketo-5-methylthiopentyl-1-phosphate (DK-MTP-1-P). This Kluyveromyces lactis (strain ATCC 8585 / CBS 2359 / DSM 70799 / NBRC 1267 / NRRL Y-1140 / WM37) (Yeast) protein is Methylthioribulose-1-phosphate dehydratase.